We begin with the raw amino-acid sequence, 498 residues long: ATP synthase subunit beta, chloroplastic (498 aa).

An ATP-binding site is contributed by 172 to 179 (GGAGVGKT).

Belongs to the ATPase alpha/beta chains family. In terms of assembly, F-type ATPases have 2 components, CF(1) - the catalytic core - and CF(0) - the membrane proton channel. CF(1) has five subunits: alpha(3), beta(3), gamma(1), delta(1), epsilon(1). CF(0) has four main subunits: a(1), b(1), b'(1) and c(9-12).

Its subcellular location is the plastid. The protein resides in the chloroplast thylakoid membrane. It carries out the reaction ATP + H2O + 4 H(+)(in) = ADP + phosphate + 5 H(+)(out). Produces ATP from ADP in the presence of a proton gradient across the membrane. The catalytic sites are hosted primarily by the beta subunits. This Gossypium barbadense (Sea Island cotton) protein is ATP synthase subunit beta, chloroplastic.